The primary structure comprises 172 residues: Adenine phosphoribosyltransferase (172 aa).

It belongs to the purine/pyrimidine phosphoribosyltransferase family. As to quaternary structure, homodimer.

It localises to the cytoplasm. The catalysed reaction is AMP + diphosphate = 5-phospho-alpha-D-ribose 1-diphosphate + adenine. The protein operates within purine metabolism; AMP biosynthesis via salvage pathway; AMP from adenine: step 1/1. In terms of biological role, catalyzes a salvage reaction resulting in the formation of AMP, that is energically less costly than de novo synthesis. This is Adenine phosphoribosyltransferase from Prochlorococcus marinus (strain SARG / CCMP1375 / SS120).